The sequence spans 276 residues: Adenylyl-sulfate kinase 1, chloroplastic (276 aa).

The transit peptide at 1 to 38 (MIAAGAKSLLGLSMASPKGIFDSNSMSNSRSVVVVRAC) directs the protein to the chloroplast. The segment at 46 to 74 (TLSHNKNGSIPEVKSINGHTGQKQGPLST) is disordered. Residues 62–74 (NGHTGQKQGPLST) are compositionally biased toward polar residues. An ATP-binding site is contributed by 108–116 (GLSGSGKST). Substrate is bound by residues aspartate 138, arginine 141, arginine 155, asparagine 158, 181–182 (IS), and glycine 231. The active-site Phosphoserine intermediate is serine 182.

It belongs to the APS kinase family. Homodimer; disulfide-linked. Interacts with APK2. As to expression, expressed in root vasculature, root tips, leaf epidermal and guard cells, pollen grains and funiculus of developing seeds.

It is found in the plastid. Its subcellular location is the chloroplast. The enzyme catalyses adenosine 5'-phosphosulfate + ATP = 3'-phosphoadenylyl sulfate + ADP + H(+). It participates in sulfur metabolism; hydrogen sulfide biosynthesis; sulfite from sulfate: step 2/3. Its function is as follows. Catalyzes the synthesis of activated sulfate. Essential for plant reproduction and viability. Required for the production of glucosinolates. The sequence is that of Adenylyl-sulfate kinase 1, chloroplastic (APK1) from Arabidopsis thaliana (Mouse-ear cress).